The following is a 362-amino-acid chain: Glutamate 5-kinase (362 aa).

Lysine 3 serves as a coordination point for ATP. Residues serine 43, aspartate 128, and asparagine 140 each coordinate substrate. ATP contacts are provided by residues threonine 160–aspartate 161 and threonine 202–lysine 208. Residues alanine 267–serine 348 enclose the PUA domain.

This sequence belongs to the glutamate 5-kinase family.

The protein resides in the cytoplasm. It catalyses the reaction L-glutamate + ATP = L-glutamyl 5-phosphate + ADP. It participates in amino-acid biosynthesis; L-proline biosynthesis; L-glutamate 5-semialdehyde from L-glutamate: step 1/2. Functionally, catalyzes the transfer of a phosphate group to glutamate to form L-glutamate 5-phosphate. In Xanthomonas oryzae pv. oryzae (strain MAFF 311018), this protein is Glutamate 5-kinase.